A 389-amino-acid polypeptide reads, in one-letter code: MELSAVGERVFAAEALLKRRIRKGRMEYLVKWKGWSQKYSTWEPEENILDARLLAAFEEREREMELYGPKKRGPKPKTFLLKAQAKAKAKTYEFRSDSARGIRIPYPGRSPQDLASTSRAREGLRNMGLSPPASSTSTSSTCRAEAPRDRDRDRDRDRERDRERERERERERERERERERGTSRVDDKPSSPGDSSKKRGPKPRKELPDPSQRPLGEPSAGLGEYLKGRKLDDTPSGAGKFPAGHSVIQLARRQDSDLVQCGVTSPSSAEATGKLAVDTFPARVIKHRAAFLEAKGQGALDPNGTRVRHGSGPPSSGGGLYRDMGAQGGRPSLIARIPVARILGDPEEESWSPSLTNLEKVVVTDVTSNFLTVTIKESNTDQGFFKEKR.

The 59-residue stretch at 11–69 (FAAEALLKRRIRKGRMEYLVKWKGWSQKYSTWEPEENILDARLLAAFEEREREMELYGP) folds into the Chromo domain. A phosphoserine mark is found at serine 110 and serine 130. The segment at 124 to 241 (LRNMGLSPPA…DDTPSGAGKF (118 aa)) is disordered. Positions 145-189 (EAPRDRDRDRDRDRERDRERERERERERERERERERGTSRVDDKP) are enriched in basic and acidic residues. Residues serine 191, serine 256, serine 265, serine 311, serine 332, and serine 352 each carry the phosphoserine modification. The tract at residues 298-327 (GALDPNGTRVRHGSGPPSSGGGLYRDMGAQ) is disordered.

In terms of assembly, component of a PRC1-like complex. Interacts with RING1 RNF2, PCGF1, PCGF2, PCGF3, BMI1, PCGF5 and PCGF6. Interacts with MLLT3 and histone H3. Interacts with PHC2.

It localises to the nucleus. Its function is as follows. Component of a Polycomb group (PcG) multiprotein PRC1-like complex, a complex class required to maintain the transcriptionally repressive state of many genes, including Hox genes, throughout development. PcG PRC1 complex acts via chromatin remodeling and modification of histones; it mediates monoubiquitination of histone H2A 'Lys-119', rendering chromatin heritably changed in its expressibility. The sequence is that of Chromobox protein homolog 8 (CBX8) from Homo sapiens (Human).